Here is a 250-residue protein sequence, read N- to C-terminus: Probable cytokinin riboside 5'-monophosphate phosphoribohydrolase LOGL6 (250 aa).

Residues E98, 116-117 (RK), and 133-139 (GYGTLEE) contribute to the substrate site.

The protein belongs to the LOG family. In terms of tissue distribution, expressed in roots, leaves, stems, tiller buds, shoot apex, immature inflorescences and flowers.

It catalyses the reaction N(6)-(dimethylallyl)adenosine 5'-phosphate + H2O = N(6)-dimethylallyladenine + D-ribose 5-phosphate. It carries out the reaction 9-ribosyl-trans-zeatin 5'-phosphate + H2O = trans-zeatin + D-ribose 5-phosphate. Cytokinin-activating enzyme working in the direct activation pathway. Phosphoribohydrolase that converts inactive cytokinin nucleotides to the biologically active free-base forms. The polypeptide is Probable cytokinin riboside 5'-monophosphate phosphoribohydrolase LOGL6 (LOGL6) (Oryza sativa subsp. japonica (Rice)).